The following is a 179-amino-acid chain: Large ribosomal subunit protein uL5 (179 aa).

Belongs to the universal ribosomal protein uL5 family. In terms of assembly, part of the 50S ribosomal subunit; part of the 5S rRNA/L5/L18/L25 subcomplex. Contacts the 5S rRNA and the P site tRNA. Forms a bridge to the 30S subunit in the 70S ribosome.

Its function is as follows. This is one of the proteins that bind and probably mediate the attachment of the 5S RNA into the large ribosomal subunit, where it forms part of the central protuberance. In the 70S ribosome it contacts protein S13 of the 30S subunit (bridge B1b), connecting the 2 subunits; this bridge is implicated in subunit movement. Contacts the P site tRNA; the 5S rRNA and some of its associated proteins might help stabilize positioning of ribosome-bound tRNAs. This Vibrio parahaemolyticus serotype O3:K6 (strain RIMD 2210633) protein is Large ribosomal subunit protein uL5.